The chain runs to 229 residues: Large ribosomal subunit protein uL1 (229 aa).

This sequence belongs to the universal ribosomal protein uL1 family. In terms of assembly, part of the 50S ribosomal subunit.

Its function is as follows. Binds directly to 23S rRNA. The L1 stalk is quite mobile in the ribosome, and is involved in E site tRNA release. Functionally, protein L1 is also a translational repressor protein, it controls the translation of the L11 operon by binding to its mRNA. The protein is Large ribosomal subunit protein uL1 of Ureaplasma urealyticum serovar 10 (strain ATCC 33699 / Western).